Here is a 150-residue protein sequence, read N- to C-terminus: Lipoprotein signal peptidase (150 aa).

A run of 3 helical transmembrane segments spans residues 8 to 28 (FYALVGFLVFLDQVTKYLAHA), 58 to 78 (GFSWLFFLLGIIALIFIGWFL), and 81 to 101 (TTGSIVFLALLQGGIAGNVFD). Catalysis depends on residues Asp116 and Asp132. A helical transmembrane segment spans residues 126–146 (VVFNIADLFILAGVFGTFLFL).

It belongs to the peptidase A8 family.

The protein localises to the cell membrane. The catalysed reaction is Release of signal peptides from bacterial membrane prolipoproteins. Hydrolyzes -Xaa-Yaa-Zaa-|-(S,diacylglyceryl)Cys-, in which Xaa is hydrophobic (preferably Leu), and Yaa (Ala or Ser) and Zaa (Gly or Ala) have small, neutral side chains.. It participates in protein modification; lipoprotein biosynthesis (signal peptide cleavage). This protein specifically catalyzes the removal of signal peptides from prolipoproteins. This Tropheryma whipplei (strain Twist) (Whipple's bacillus) protein is Lipoprotein signal peptidase.